Consider the following 426-residue polypeptide: Glutamate-1-semialdehyde 2,1-aminomutase (426 aa).

Residue lysine 263 is modified to N6-(pyridoxal phosphate)lysine.

Belongs to the class-III pyridoxal-phosphate-dependent aminotransferase family. HemL subfamily. As to quaternary structure, homodimer. Requires pyridoxal 5'-phosphate as cofactor.

It localises to the cytoplasm. It carries out the reaction (S)-4-amino-5-oxopentanoate = 5-aminolevulinate. It functions in the pathway porphyrin-containing compound metabolism; protoporphyrin-IX biosynthesis; 5-aminolevulinate from L-glutamyl-tRNA(Glu): step 2/2. This Dichelobacter nodosus (strain VCS1703A) protein is Glutamate-1-semialdehyde 2,1-aminomutase.